The sequence spans 118 residues: Ribonuclease P protein component (118 aa).

The protein belongs to the RnpA family. Consists of a catalytic RNA component (M1 or rnpB) and a protein subunit.

It catalyses the reaction Endonucleolytic cleavage of RNA, removing 5'-extranucleotides from tRNA precursor.. RNaseP catalyzes the removal of the 5'-leader sequence from pre-tRNA to produce the mature 5'-terminus. It can also cleave other RNA substrates such as 4.5S RNA. The protein component plays an auxiliary but essential role in vivo by binding to the 5'-leader sequence and broadening the substrate specificity of the ribozyme. The sequence is that of Ribonuclease P protein component from Photobacterium profundum (strain SS9).